We begin with the raw amino-acid sequence, 82 residues long: MQTASWVMVMMMVWITAPLSEGGKLNDVIRGLVPDDVTPQLILRSLFFHRPSDSVVRSTVPVHICYWKVCPPSPWRRPNGKG.

The signal sequence occupies residues 1-22 (MQTASWVMVMMMVWITAPLSEG). Residues 23–57 (GKLNDVIRGLVPDDVTPQLILRSLFFHRPSDSVVR) constitute a propeptide that is removed on maturation. C65 and C70 form a disulfide bridge. W67 bears the D-tryptophan mark. 4-hydroxyproline is present on residues P71, P72, and P74. A propeptide spanning residues 75-82 (WRRPNGKG) is cleaved from the precursor.

It belongs to the conotoxin C superfamily. Consomatin family. As to expression, expressed by the venom duct.

It localises to the secreted. Its function is as follows. Moderately activates human somatostatin receptors (SSTR) with a preferential activation of SSTR1 and SSTR4. In vivo, does not cause behavioral changes in mice within a few minutes of intracranial injection, but causes a progressive loss of movement thereafter. Four to five hours after injection, mice recover, even with the highest dose tested. Shows antinociception and antihyperalgesia activities in two mouse models of acute pain, most probably by acting outside the central nervous system. The chain is Consomatin Mao1 from Conus maioensis (Sea snail).